The sequence spans 412 residues: Heme chaperone HemW (412 aa).

The Radical SAM core domain occupies glycine 4–alanine 241. Tyrosine 13 contacts S-adenosyl-L-methionine. Residues cysteine 19, cysteine 23, and cysteine 26 each coordinate [2Fe-2S] cluster. S-adenosyl-L-methionine-binding positions include glycine 72, glycine 73–threonine 74, glutamate 105, glutamine 132, arginine 144, and aspartate 169.

This sequence belongs to the anaerobic coproporphyrinogen-III oxidase family. HemW subfamily. Requires [4Fe-4S] cluster as cofactor.

Its subcellular location is the cytoplasm. Probably acts as a heme chaperone, transferring heme to an unknown acceptor. Binds one molecule of heme per monomer, possibly covalently. Binds 1 [2Fe-2S] cluster. Although this protein has sequence motifs typically found in proteins binding the [4Fe-4S]-AdoMet radical-SAM cluster and S-adenosylmethionine, spectroscopic evidence suggests that a [2Fe-2S] cluster is present; S-adenosylmethionine was not detected. Has no detectable coproporphyrinogen-III oxidase activity. The chain is Heme chaperone HemW from Synechocystis sp. (strain ATCC 27184 / PCC 6803 / Kazusa).